Consider the following 198-residue polypeptide: Probable chorismate pyruvate-lyase (198 aa).

Substrate contacts are provided by Arg-73, Leu-111, and Glu-172.

It belongs to the UbiC family.

It is found in the cytoplasm. The enzyme catalyses chorismate = 4-hydroxybenzoate + pyruvate. The protein operates within cofactor biosynthesis; ubiquinone biosynthesis. In terms of biological role, removes the pyruvyl group from chorismate, with concomitant aromatization of the ring, to provide 4-hydroxybenzoate (4HB) for the ubiquinone pathway. In Burkholderia orbicola (strain AU 1054), this protein is Probable chorismate pyruvate-lyase.